The following is a 486-amino-acid chain: Ribulose bisphosphate carboxylase large chain, chromosomal (486 aa).

Residues asparagine 126 and threonine 176 each contribute to the substrate site. The active-site Proton acceptor is the lysine 178. Lysine 180 is a binding site for substrate. Mg(2+) contacts are provided by lysine 204, aspartate 206, and glutamate 207. N6-carboxylysine is present on lysine 204. Histidine 296 serves as the catalytic Proton acceptor. Arginine 297, histidine 329, and serine 381 together coordinate substrate.

The protein belongs to the RuBisCO large chain family. Type I subfamily. As to quaternary structure, heterohexadecamer of 8 large chains and 8 small chains; disulfide-linked. The disulfide link is formed within the large subunit homodimers. The cofactor is Mg(2+). In terms of processing, the disulfide bond which can form between Cys-278 in the large chain dimeric partners within the hexadecamer appears to be associated with oxidative stress and protein turnover.

The catalysed reaction is 2 (2R)-3-phosphoglycerate + 2 H(+) = D-ribulose 1,5-bisphosphate + CO2 + H2O. It carries out the reaction D-ribulose 1,5-bisphosphate + O2 = 2-phosphoglycolate + (2R)-3-phosphoglycerate + 2 H(+). Its function is as follows. RuBisCO catalyzes two reactions: the carboxylation of D-ribulose 1,5-bisphosphate, the primary event in carbon dioxide fixation, as well as the oxidative fragmentation of the pentose substrate. Both reactions occur simultaneously and in competition at the same active site. This chain is Ribulose bisphosphate carboxylase large chain, chromosomal (cbbL1), found in Cupriavidus necator (strain ATCC 17699 / DSM 428 / KCTC 22496 / NCIMB 10442 / H16 / Stanier 337) (Ralstonia eutropha).